A 474-amino-acid polypeptide reads, in one-letter code: Sestrin homolog (474 aa).

Belongs to the sestrin family.

The protein localises to the nucleus. The protein resides in the cytoplasm. Functionally, may function as a negative feedback regulator of TOR function. This is Sestrin homolog from Caenorhabditis elegans.